The following is a 315-amino-acid chain: Protoheme IX farnesyltransferase (315 aa).

The next 9 membrane-spanning stretches (helical) occupy residues V34–N54, P55–I75, A105–N125, L127–L147, I155–G175, L177–W197, W226–H246, L251–L271, and Y294–M314.

It belongs to the UbiA prenyltransferase family. Protoheme IX farnesyltransferase subfamily.

It is found in the cell inner membrane. The catalysed reaction is heme b + (2E,6E)-farnesyl diphosphate + H2O = Fe(II)-heme o + diphosphate. Its pathway is porphyrin-containing compound metabolism; heme O biosynthesis; heme O from protoheme: step 1/1. In terms of biological role, converts heme B (protoheme IX) to heme O by substitution of the vinyl group on carbon 2 of heme B porphyrin ring with a hydroxyethyl farnesyl side group. The chain is Protoheme IX farnesyltransferase from Gluconacetobacter diazotrophicus (strain ATCC 49037 / DSM 5601 / CCUG 37298 / CIP 103539 / LMG 7603 / PAl5).